We begin with the raw amino-acid sequence, 340 residues long: MSSTQEASVTDLPVKRPREAEEDNNGGAMETENGGGEIKEPSCMSSIIPGWFSEISPMWPGEAHSLKVEKILFQGKSDYQDVIVFQSATYGKVLVLDGVIQLTERDECAYQEMITHLPLCSISNPKKVLVIGGGDGGVLREVARHSSVEQIDICEIDKMVVDVAKQYFPNVAVGYEDPRVNLIIGDGVAFLKNAAEGTYDAVIVDSSDPIGPAKELFEKPFFESVNRALRPGGVVCTQAESLWLHMDIIEDIVSNCRDIFKGSVNYAWTSVPTYPSGVIGFMLCSSEGPQVDFKKPVSLIDTDESSIKSHCPLKYYNAEIHSAAFCLPSFAKKVIDSKAN.

The disordered stretch occupies residues 1–41 (MSSTQEASVTDLPVKRPREAEEDNNGGAMETENGGGEIKEP). Residue Ser2 is modified to N-acetylserine. The PABS domain occupies 49–286 (PGWFSEISPM…GVIGFMLCSS (238 aa)). Residue Gln80 coordinates S-adenosyl 3-(methylsulfanyl)propylamine. Tyr110 lines the putrescine pocket. S-adenosyl 3-(methylsulfanyl)propylamine-binding positions include Gln111, Asp135, Glu155, 186–187 (DG), and Asp205. Catalysis depends on Asp205, which acts as the Proton acceptor. Putrescine is bound by residues 205 to 208 (DSSD) and Tyr274.

Belongs to the spermidine/spermine synthase family. Heterodimer. Component of a multiprotein complex. Interacts with SPMS and SPDSYN1.

It carries out the reaction S-adenosyl 3-(methylsulfanyl)propylamine + putrescine = S-methyl-5'-thioadenosine + spermidine + H(+). Its pathway is amine and polyamine biosynthesis; spermidine biosynthesis; spermidine from putrescine: step 1/1. This is Spermidine synthase 2 (SPDSYN2) from Arabidopsis thaliana (Mouse-ear cress).